Consider the following 83-residue polypeptide: Scyreptin (83 aa).

Functionally, cationic antimicrobial peptide that exhibits a potent and broad-spectrum antimicrobial activity against both bacteria and fungi, as well as against the multidrug-resistant bacteria P.aeruginosa. Exhibits rapid bactericidal kinetic. Acts by destroying the integrity of bacterial membranes, leading to bacterial death. Also exhibits potent anti-biofilm activity against P.aeruginosa. Shows high thermal stability and ion tolerance, as it maintains antibacterial activity even when heated to 100 degrees Celsius for 30 minutes and in presence of high levels of NaCl, CaCl(2) and MgCl(2). Does not show cytotoxicity and hemolytic activity. In a mouse model of burn infection, exhibits a remarkably reduction in the bacterial load caused by multidrug-resistant P.aeruginosa at the site of infection, and promotes wound healing. This Scylla paramamosain (Mud crab) protein is Scyreptin.